Reading from the N-terminus, the 576-residue chain is Proline--tRNA ligase (576 aa).

It belongs to the class-II aminoacyl-tRNA synthetase family. ProS type 1 subfamily. Homodimer.

It localises to the cytoplasm. The catalysed reaction is tRNA(Pro) + L-proline + ATP = L-prolyl-tRNA(Pro) + AMP + diphosphate. In terms of biological role, catalyzes the attachment of proline to tRNA(Pro) in a two-step reaction: proline is first activated by ATP to form Pro-AMP and then transferred to the acceptor end of tRNA(Pro). As ProRS can inadvertently accommodate and process non-cognate amino acids such as alanine and cysteine, to avoid such errors it has two additional distinct editing activities against alanine. One activity is designated as 'pretransfer' editing and involves the tRNA(Pro)-independent hydrolysis of activated Ala-AMP. The other activity is designated 'posttransfer' editing and involves deacylation of mischarged Ala-tRNA(Pro). The misacylated Cys-tRNA(Pro) is not edited by ProRS. The chain is Proline--tRNA ligase from Psychrobacter sp. (strain PRwf-1).